A 239-amino-acid polypeptide reads, in one-letter code: Ribonuclease 3 (239 aa).

Residues 11–133 (HTAIQKKLGY…MFAAVSFDAD (123 aa)) enclose the RNase III domain. Position 46 (glutamate 46) interacts with Mg(2+). Aspartate 50 is a catalytic residue. 2 residues coordinate Mg(2+): aspartate 119 and glutamate 122. The active site involves glutamate 122. Positions 160-230 (DGKTALQEAL…AKEALKWLEE (71 aa)) constitute a DRBM domain.

It belongs to the ribonuclease III family. Homodimer. The cofactor is Mg(2+).

Its subcellular location is the cytoplasm. The catalysed reaction is Endonucleolytic cleavage to 5'-phosphomonoester.. Digests double-stranded RNA. Involved in the processing of primary rRNA transcript to yield the immediate precursors to the large and small rRNAs (23S and 16S). Processes some mRNAs, and tRNAs when they are encoded in the rRNA operon. Processes pre-crRNA and tracrRNA of type II CRISPR loci if present in the organism. This Neisseria gonorrhoeae (strain NCCP11945) protein is Ribonuclease 3.